The sequence spans 272 residues: Energy-coupling factor transporter ATP-binding protein EcfA1 (272 aa).

The region spanning 2–237 (IKVSDVCFSY…KNIIEKAKID (236 aa)) is the ABC transporter domain. Residue 37-44 (GHNGSGKS) coordinates ATP.

Belongs to the ABC transporter superfamily. Energy-coupling factor EcfA family. Forms a stable energy-coupling factor (ECF) transporter complex composed of 2 membrane-embedded substrate-binding proteins (S component), 2 ATP-binding proteins (A component) and 2 transmembrane proteins (T component).

It localises to the cell membrane. ATP-binding (A) component of a common energy-coupling factor (ECF) ABC-transporter complex. Unlike classic ABC transporters this ECF transporter provides the energy necessary to transport a number of different substrates. This chain is Energy-coupling factor transporter ATP-binding protein EcfA1, found in Mesomycoplasma hyopneumoniae (strain J / ATCC 25934 / NCTC 10110) (Mycoplasma hyopneumoniae).